A 421-amino-acid polypeptide reads, in one-letter code: Tyrosine--tRNA ligase (421 aa).

Tyr35 lines the L-tyrosine pocket. A 'HIGH' region motif is present at residues 40 to 49 (PTGPSLHAGH). Residues Tyr169 and Gln173 each contribute to the L-tyrosine site. A 'KMSKS' region motif is present at residues 229 to 233 (KFGKS). ATP is bound at residue Lys232. One can recognise an S4 RNA-binding domain in the interval 354-420 (RTIVDLLIAS…GKKNFAGVKI (67 aa)).

The protein belongs to the class-I aminoacyl-tRNA synthetase family. TyrS type 1 subfamily. As to quaternary structure, homodimer.

It localises to the cytoplasm. It carries out the reaction tRNA(Tyr) + L-tyrosine + ATP = L-tyrosyl-tRNA(Tyr) + AMP + diphosphate + H(+). In terms of biological role, catalyzes the attachment of tyrosine to tRNA(Tyr) in a two-step reaction: tyrosine is first activated by ATP to form Tyr-AMP and then transferred to the acceptor end of tRNA(Tyr). The chain is Tyrosine--tRNA ligase from Corynebacterium efficiens (strain DSM 44549 / YS-314 / AJ 12310 / JCM 11189 / NBRC 100395).